Reading from the N-terminus, the 743-residue chain is MAWGWWKRKRRWWWRKRWTRGRLRRRWPRRSRRRPRRRRVRRRRRWRRGRPRRRLYRRGRRYRRKRKRAKITIRQWQPAMTRRCFIRGHMPALICGWGAYASNYTSHLEDKIVKGPYGGGHATFRFSLQVLCEEHLKHHNYWTRSNQDLELALYYGATIKFYRSPDTDFIVTYQRKSPLGGNILTAPSLHPAEAMLSKNKILIPSLQTKPKGKKTVKVNIPPPTLFVHKWYFQKDICDLTLFNLNVVAADLRFPFCSPQTDNVCITFQVLAAEYNNFLSTTLGTTNESTFIENFLKVAFPDDKPRHSNILNTFRTEGCMSHPQLQKFKPPNTGPGENKYFFTPDGLWGDPIYIYNNGVQQQTAQQIREKIKKNMENYYAKIVEENTIITKGSKAHCHLTGIFSPPFLNIGRVAREFPGLYTDVVYNPWTDKGKGNKIWLDSLTKSDNIYDPRQSILLMADMPLYIMLNGYIDWAKKERNNWGLATQYRLLLTCPYTFPRLYVETNPNYGYVPYSESFGAGQMPDKNPYVPITWRGKWYPHILHQEAVINDIVISGPFTPKDTKPVMQLNMKYSFRFTWGGNPISTQIVKDPCTQPTFEIPGGGNIPRRIQVINPKVLGPSYSFRSFDLRRDMFSGSSLKRVSEQQETSEFLFSGGKRPRIDLPKYVPPEEDFNIQERQQREQRPWTSESESEAEAQEETQAGSVREQLQQQLQEQFQLRRGLKCLFEQLVRTQQGVHVDPCLV.

The interval 665–706 (YVPPEEDFNIQERQQREQRPWTSESESEAEAQEETQAGSVRE) is disordered.

This sequence belongs to the anelloviridae capsid protein family.

It localises to the virion. Self assemble to form an icosahedral capsid. This is Capsid protein from Torque teno virus (isolate Human/China/CT39F/2001) (TTV).